We begin with the raw amino-acid sequence, 264 residues long: MNNQSAKKSPTRLTYISDIIEISPYLRRLVLSGEQLANFPADQQGAYVKVLIPQPGETTVNMTLTGPNAAIKRSYTIREFDPVRGQLSLDFVINKHTGPATDWAKLANVGDTVAIAGPGPLKMNRFDFNDYLLFGDSTSINAVDALIKRLPATAKGHIIMLVNSHQEQALLSQHPLLKTHWLVLNDSITAEQQIDWLLDKLELFGDLPAVTQVFVGLEATQVRVIKQYLLEQQQLPLSSISATGYWKRNTDADTFGKQKQMQPL.

The FAD-binding FR-type domain occupies 9 to 127; it reads SPTRLTYISD…PGPLKMNRFD (119 aa). Arg-73, Ser-74, Thr-76, Asp-90, Val-92, His-96, Ala-100, Thr-101, Lys-247, Asn-249, Thr-250, and Ala-252 together coordinate FAD.

It belongs to the SIP oxidoreductase family. Requires FAD as cofactor.

Ferric-siderophore reductase involved in iron removal from the siderophores after their transport into the cell. Catalyzes the reduction of the ferric iron bound to the hydroxamate siderophores produced by Shewanella to ferrous iron. Can use a ferredoxin as electron donor. Despite the clear evidence for the interaction with NAD(P)H, no direct reduction of the enzyme by these compounds is observed, nor consumption of NAD(P)H, suggesting that NADH and NADPH are not the physiological electron donors. The sequence is that of Ferric siderophore reductase from Shewanella frigidimarina (strain NCIMB 400).